Here is a 328-residue protein sequence, read N- to C-terminus: 4-hydroxythreonine-4-phosphate dehydrogenase (328 aa).

His134 and Thr135 together coordinate substrate. His164, His209, and His265 together coordinate a divalent metal cation. Substrate-binding residues include Lys273, Asn282, and Arg291.

It belongs to the PdxA family. Homodimer. Zn(2+) is required as a cofactor. It depends on Mg(2+) as a cofactor. Co(2+) serves as cofactor.

The protein localises to the cytoplasm. It catalyses the reaction 4-(phosphooxy)-L-threonine + NAD(+) = 3-amino-2-oxopropyl phosphate + CO2 + NADH. It participates in cofactor biosynthesis; pyridoxine 5'-phosphate biosynthesis; pyridoxine 5'-phosphate from D-erythrose 4-phosphate: step 4/5. Functionally, catalyzes the NAD(P)-dependent oxidation of 4-(phosphooxy)-L-threonine (HTP) into 2-amino-3-oxo-4-(phosphooxy)butyric acid which spontaneously decarboxylates to form 3-amino-2-oxopropyl phosphate (AHAP). In Vibrio vulnificus (strain YJ016), this protein is 4-hydroxythreonine-4-phosphate dehydrogenase.